A 481-amino-acid chain; its full sequence is Serine/threonine-protein kinase US3 (481 aa).

The segment at 12-63 (GQGRRKEEAVPPETKPSRVFPHGPFYTPAEDACLDSPPPETPKPSHTTPPSE) is disordered. The Protein kinase domain maps to 191 to 478 (FTIHGALTPG…AAELLCLPLF (288 aa)). ATP is bound by residues 197–205 (LTPGSEGCV) and Lys-220. The Proton acceptor role is filled by Asp-305.

This sequence belongs to the protein kinase superfamily. Ser/Thr protein kinase family. As to quaternary structure, interacts with host LAT; this interaction prevents LAT activation of TRAF6. In terms of processing, phosphorylated by UL13; this phosphorylation regulates subsequent phosphorylation of UL31 and UL34 by US3. Autophosphorylated.

The protein resides in the host cytoplasm. Its subcellular location is the host nucleus. The enzyme catalyses L-seryl-[protein] + ATP = O-phospho-L-seryl-[protein] + ADP + H(+). It carries out the reaction L-threonyl-[protein] + ATP = O-phospho-L-threonyl-[protein] + ADP + H(+). In terms of biological role, multifunctional serine/threonine kinase that plays a role in several processes including egress of virus particles from the nucleus, modulation of the actin cytoskeleton and inhibition of host immune response. Phosphorylates UL31 and UL34, two critical regulators of capsid budding from nucleus to endoplasmic reticulum, thereby facilitating virion egress. Modulates and redistributes host components of the nuclear envelope, including LMNA, emerin/EMD and the nuclear matrix protein MATR3. In turn, facilitates nuclear pore impairment and capsid release through impaired nuclear envelope. Phosphorylates envelope glycoprotein B (gB), probably to direct it to the cell surface. Promotes virus intracellular spread by restructuring host cell cytoskeleton. Blocks host apoptosis to extend cell survival and allow efficient viral replication. Promotes viral gene expression by phosphorylating host HDAC2 to reduce viral genome silencing. Strongly inhibits TCR-activated signal transduction in T-cells by reducing the ubiquitination of LAT and TRAF6, leading to a suboptimal activation of LAT. Subverts host antiviral innate immunity by inhibiting type I interferon production through hyperphosphorylation of beta-catenin/CTNNB1. In addition, phosphorylates the RNA sensor RIGI and the transcription factor IRF3 to prevent the RLR-mediated antiviral signaling pathway. Hyperphosphorylates host RELA and thereby dampens NF-kappa-B signaling. Acts as an immunoevasin partly responsible for inhibition of MR1 expression and antigen presentation in response to bacterial infection. The sequence is that of Serine/threonine-protein kinase US3 (US3) from Human herpesvirus 1 (strain 17) (HHV-1).